The sequence spans 214 residues: DNA-binding protein HupB (214 aa).

Lys3 bears the N6-acetyllysine mark. The residue at position 3 (Lys3) is an N6-succinyllysine. Phosphothreonine is present on residues Thr43 and Thr45. 3 positions are modified to N6-acetyllysine: Lys72, Lys86, and Lys103. The tract at residues 100-214 (PAVKRGVGAS…KKATARRGRK (115 aa)) is disordered. A compositionally biased stretch (low complexity) spans 102–112 (VKRGVGASAAK). Lys113 carries the post-translational modification N6-succinyllysine. Basic residues predominate over residues 113 to 214 (KVAKKAPAKK…KKATARRGRK (102 aa)). N6-acetyllysine is present on residues Lys116 and Lys133. An N6-succinyllysine modification is found at Lys142. N6-acetyllysine is present on residues Lys146 and Lys167.

It belongs to the bacterial histone-like protein family. Long actinobacterial subfamily. In terms of assembly, oligomerizes. Homodimer; the crystallized protein is missing the C-terminal 105 residues. Interacts with topoisomerase 1 (topA). Interacts with Eis. Interacts with NAD-dependent protein deacylase NPD (MRA_1161). Interacts with MRA_0812 CoA transferase. Post-translationally, phosphorylated in vivo on Ser and Thr-residues; the protein is degraded during purification so most sites were not identified, but at least one of Thr-43 and/or Thr-45 are modified in vivo. In vitro at least PknE, PknF and PknB phosphorylate HupB; PknE is the most active and phosphorylates many sites in vitro including Thr-43 and Thr-45. Acetylated on 8 Lys residues in vivo (probably by Eis). In vitro acetylated by Eis on 28 residues (strains H37Rv and H37Ra), many more than those identified in vivo. Also acetylated by MRA_0812. Deacetylated in vitro by NAD-dependent protein deacylase NPD (MRA_1161). In terms of processing, succinylated in vivo and in vitro by MRA_0812 and by Eis; only 3 residues are found to be succinylated in vivo, while 27 are modifed in vitro by MRA_0812 and 32 are succinylated by Eis. NAD-dependent protein deacylase (MRA_1161) desuccinylates this protein.

It is found in the cytoplasm. Its subcellular location is the nucleoid. It carries out the reaction 4 Fe(2+) + O2 + 4 H(+) = 4 Fe(3+) + 2 H2O. With respect to regulation, two trans-stilbene derivatives, 4,4'-[(E)-ethene-1,2 diylbis({5[(phenylcarbonyl)amino]benzene-2,1-diyl}sulfonylimino)] dibenzoic acid and its methoxy derivative 4,4'-[1,2-ethenediylbis({5-[(4-methoxybenzoyl)amino]-2,1phenylene}sulfonylimino)] dibenzoic acid, respectively SD1 and SD4, inhibit DNA binding with 50% inhibition at 20 uM for SD1 and 1.7 uM for SD4. SD1 and SD4 have minimal inhibitory concentrations of 400 and 800 uM on strain H37Ra respectively. In terms of biological role, a nucleoid-associated protein (NAP) that plays a role in local chromosome architecture. Binds DNA non-sequence specifically; in vitro phosphorylation of an N-terminal fragment decreases DNA-binding. Stimulates supercoiling relaxation by topoisomerase 1 (Top1, topA), at higher than 80 uM inhibits relaxation, has no effect on DNA gyrase; the effect is independent of DNA-binding. Increases the intervening strand passage activity of Top1 that occurs between the two catalytic trans-esterification reactions. Does not bind ssDNA, probably helps condense chromosomes. Binds dsDNA; in vitro acetylated protein binds 10-fold less well to DNA (note in vitro acetylated protein is more heavily modified than in vivo modified protein). In vitro acetylated protein compacts DNA less well than unmodified protein. In vitro succinylated DNA bind dsDNA less well than unmodified protein (note in vitro succinylated protein is more heavily modified than in vivo modified protein). Its function is as follows. Has ferroxidase activity, converts Fe(2+) into Fe(3+). Binds Fe(3+) but not Fe(2+); prevents the generation of hydroxyl radicals by the Fenton reaction and thus protects DNA from damage. May function in iron storage. Functionally, required for biofilm formation; trimethylation by recombinant human SUV39H1 (a histone methyltransferase) inhibits biofilm formation. Probably influences transcription. RNase E and HupB jointly contribute to cellular adaptation to changing growth conditions and survival during antibiotic treatment and in the host. In Mycobacterium tuberculosis (strain ATCC 25177 / H37Ra), this protein is DNA-binding protein HupB.